The following is an 86-amino-acid chain: Toxin Tpa6 (86 aa).

Residues 1–20 (MSIFPIALALLLIGLEEGEA) form the signal peptide. Positions 22–85 (RDGYPLSKNN…WGDPGTKPCM (64 aa)) constitute an LCN-type CS-alpha/beta domain. Disulfide bonds link C33/C84, C37/C58, C43/C64, and C47/C66.

The protein belongs to the long (4 C-C) scorpion toxin superfamily. Sodium channel inhibitor family. Beta subfamily. Expressed by the venom gland.

Its subcellular location is the secreted. Its function is as follows. Beta toxins bind voltage-independently at site-4 of sodium channels (Nav) and shift the voltage of activation toward more negative potentials thereby affecting sodium channel activation and promoting spontaneous and repetitive firing. The chain is Toxin Tpa6 from Tityus pachyurus (Colombian scorpion).